Consider the following 1281-residue polypeptide: Tubulin polyglutamylase TTLL5 (1281 aa).

Residues 62-407 (RYHLSYKIVR…VCQDPAQRAS (346 aa)) form the TTL domain. Residues Lys-180, 186-187 (RG), 208-211 (SRYI), and 221-223 (KFD) each bind ATP. Position 186 (Arg-186) interacts with a protein. Arg-247 contacts L-glutamate. An ATP-binding site is contributed by 268–269 (TN). Residues Tyr-270, Ser-271, and Lys-293 each contribute to the L-glutamate site. 3 residues coordinate Mg(2+): Asp-353, Glu-366, and Asn-368. Residues 378-488 (PLDLKIKASM…RGGFIRIFPT (111 aa)) form a c-MTBD region region. Lys-384 serves as a coordination point for L-glutamate. Disordered stretches follow at residues 577-614 (MNVK…LREN), 1072-1114 (SASA…LQTG), and 1199-1281 (SSAT…HTKI). The segment covering 584–604 (ESEEEEEVALDNEDEEQEASQ) has biased composition (acidic residues). 4 stretches are compositionally biased toward polar residues: residues 1086 to 1113 (SGPT…SLQT), 1199 to 1212 (SSAT…TTLP), 1240 to 1263 (ATSQ…SSLN), and 1270 to 1281 (ITSSTDPAHTKI).

It belongs to the tubulin--tyrosine ligase family. In terms of assembly, interacts with the transcriptional coactivators NCOA1/SRC-1 and NCOA2/TIF2. Mg(2+) is required as a cofactor. Expressed in the retina, found in the rod and cone photoreceptors (at protein level). Widely expressed with highest levels in heart and skeletal muscle and low levels in other tissues.

It localises to the cell projection. The protein resides in the cilium. It is found in the cytoplasm. Its subcellular location is the cytoskeleton. The protein localises to the cilium basal body. It localises to the nucleus. It catalyses the reaction L-glutamyl-[protein] + L-glutamate + ATP = gamma-L-glutamyl-L-glutamyl-[protein] + ADP + phosphate + H(+). It carries out the reaction (L-glutamyl)(n)-gamma-L-glutamyl-L-glutamyl-[protein] + L-glutamate + ATP = (L-glutamyl)(n+1)-gamma-L-glutamyl-L-glutamyl-[protein] + ADP + phosphate + H(+). In terms of biological role, polyglutamylase which modifies tubulin, generating polyglutamate side chains on the gamma-carboxyl group of specific glutamate residues within the C-terminal tail of tubulin. Preferentially mediates ATP-dependent initiation step of the polyglutamylation reaction over the elongation step. Preferentially modifies the alpha-tubulin tail over a beta-tail. Required for CCSAP localization to both polyglutamylated spindle and cilia microtubules. Increases the effects of transcriptional coactivator NCOA2/TIF2 in glucocorticoid receptor-mediated repression and induction and in androgen receptor-mediated induction. The chain is Tubulin polyglutamylase TTLL5 from Homo sapiens (Human).